Reading from the N-terminus, the 332-residue chain is 3-ketodihydrosphingosine reductase (332 aa).

The first 25 residues, 1 to 25, serve as a signal peptide directing secretion; it reads MLLLAAAGLVAFVLLLYMVSPLISP. Over 26–270 the chain is Cytoplasmic; it reads KPLALPGAHV…GNFNSSIGSD (245 aa). 7 residues coordinate NADPH: glycine 39, serine 41, serine 42, glycine 43, arginine 64, lysine 68, and aspartate 93. The GXSXG signature appears at 39-43; the sequence is GGSSG. The Proton donor role is filled by serine 172. Tyrosine 186 (proton acceptor) is an active-site residue. 2 residues coordinate NADP(+): tyrosine 186 and lysine 190. Residue lysine 190 is the Lowers pKa of active site Tyr of the active site. A helical membrane pass occupies residues 271–291; the sequence is GYMLSSLTCGMAPVTSITEGL. The Lumenal segment spans residues 292 to 293; it reads QQ. Residues 294 to 314 form a helical membrane-spanning segment; it reads VVTMGLFRTIALFYLGSFDNI. The Cytoplasmic segment spans residues 315-332; sequence VRRCMVQKAKPEVVDKTA.

It belongs to the short-chain dehydrogenases/reductases (SDR) family.

Its subcellular location is the endoplasmic reticulum membrane. It carries out the reaction sphinganine + NADP(+) = 3-oxosphinganine + NADPH + H(+). The protein operates within lipid metabolism; sphingolipid metabolism. In terms of biological role, catalyzes the reduction of 3'-oxosphinganine (3-ketodihydrosphingosine/KDS) to sphinganine (dihydrosphingosine/DHS), the second step of de novo sphingolipid biosynthesis. This Mus musculus (Mouse) protein is 3-ketodihydrosphingosine reductase (Kdsr).